A 172-amino-acid polypeptide reads, in one-letter code: C-phycocyanin-2 beta subunit (172 aa).

Position 72 is an N4-methylasparagine (asparagine 72). (2R,3E)-phycocyanobilin-binding residues include cysteine 82 and cysteine 153.

This sequence belongs to the phycobiliprotein family. Heterodimer of an alpha and a beta subunit, which further assembles into trimers and the trimers into hexamers. Post-translationally, contains two covalently linked bilin chromophores.

It is found in the cellular thylakoid membrane. Its function is as follows. Light-harvesting photosynthetic bile pigment-protein from the phycobiliprotein complex (phycobilisome, PBS). Phycocyanin is the major phycobiliprotein in the PBS rod. The polypeptide is C-phycocyanin-2 beta subunit (cpcB2) (Microchaete diplosiphon (Fremyella diplosiphon)).